Reading from the N-terminus, the 518-residue chain is Glutamate--cysteine ligase (518 aa).

It belongs to the glutamate--cysteine ligase type 1 family. Type 1 subfamily.

The enzyme catalyses L-cysteine + L-glutamate + ATP = gamma-L-glutamyl-L-cysteine + ADP + phosphate + H(+). Its pathway is sulfur metabolism; glutathione biosynthesis; glutathione from L-cysteine and L-glutamate: step 1/2. The protein is Glutamate--cysteine ligase of Escherichia coli O127:H6 (strain E2348/69 / EPEC).